Consider the following 160-residue polypeptide: Ribosomal RNA large subunit methyltransferase H (160 aa).

Residues L76 and G108 each coordinate S-adenosyl-L-methionine.

This sequence belongs to the RNA methyltransferase RlmH family. In terms of assembly, homodimer.

The protein resides in the cytoplasm. It carries out the reaction pseudouridine(1915) in 23S rRNA + S-adenosyl-L-methionine = N(3)-methylpseudouridine(1915) in 23S rRNA + S-adenosyl-L-homocysteine + H(+). Its function is as follows. Specifically methylates the pseudouridine at position 1915 (m3Psi1915) in 23S rRNA. The polypeptide is Ribosomal RNA large subunit methyltransferase H (Bradyrhizobium diazoefficiens (strain JCM 10833 / BCRC 13528 / IAM 13628 / NBRC 14792 / USDA 110)).